Consider the following 155-residue polypeptide: Ribosome maturation factor RimP (155 aa).

This sequence belongs to the RimP family.

It is found in the cytoplasm. Required for maturation of 30S ribosomal subunits. This Desulforapulum autotrophicum (strain ATCC 43914 / DSM 3382 / VKM B-1955 / HRM2) (Desulfobacterium autotrophicum) protein is Ribosome maturation factor RimP.